The following is a 136-amino-acid chain: Transport protein particle 20 kDa subunit (136 aa).

Belongs to the TRAPP small subunits family. Sedlin subfamily.

Its subcellular location is the cytoplasm. It is found in the golgi apparatus. It localises to the cis-Golgi network. The protein resides in the endoplasmic reticulum. Component of the TRAPP I and TRAPP II complexes. TRAPP I plays a key role in the late stages of endoplasmic reticulum to Golgi traffic. TRAPP II seems to play a role in intra-Golgi transport. This chain is Transport protein particle 20 kDa subunit (trs20), found in Schizosaccharomyces pombe (strain 972 / ATCC 24843) (Fission yeast).